The following is a 529-amino-acid chain: Extracellular signal-regulated kinase 1 (529 aa).

Disordered stretches follow at residues 1–20 (MEPE…THQS) and 100–131 (QQNQ…SNFN). Polar residues predominate over residues 8–20 (FQSQMDSDNTHQS). A compositionally biased stretch (low complexity) spans 100–117 (QQNQQQQSQQMTQQQLQQ). One can recognise a Protein kinase domain in the interval 149–439 (YSIVKCIGHG…EALAHPYFQS (291 aa)). ATP contacts are provided by residues 155 to 163 (IGHGAYGVV) and K178. D275 serves as the catalytic Proton acceptor. At T309 the chain carries Phosphothreonine. The short motif at 309–311 (TEY) is the TXY element. Position 311 is a phosphotyrosine (Y311).

It belongs to the protein kinase superfamily. CMGC Ser/Thr protein kinase family. MAP kinase subfamily. The cofactor is Mg(2+). Dually phosphorylated on Thr-309 and Tyr-311, which activates the enzyme.

The enzyme catalyses L-seryl-[protein] + ATP = O-phospho-L-seryl-[protein] + ADP + H(+). The catalysed reaction is L-threonyl-[protein] + ATP = O-phospho-L-threonyl-[protein] + ADP + H(+). Its activity is regulated as follows. Activated by tyrosine and threonine phosphorylation. Kinase involved in a signal transduction pathway. The protein is Extracellular signal-regulated kinase 1 (erkA) of Dictyostelium discoideum (Social amoeba).